Here is a 247-residue protein sequence, read N- to C-terminus: Lysosomal membrane ascorbate-dependent ferrireductase CYB561A3 (247 aa).

Topologically, residues 1–3 are cytoplasmic; it reads MRG. Residues 4–24 form a helical membrane-spanning segment; it reads IVGFYITYLLCLILGIACVVL. The Cytochrome b561 domain maps to 13–223; sequence LCLILGIACV…FGLVVLKILS (211 aa). The Lumenal segment spans residues 25 to 46; that stretch reads VVHWNFMYRDGFAWDGSSKNFN. A helical membrane pass occupies residues 47–67; that stretch reads WHPVLMVTGMLVLYGNAAVVY. The heme b site is built by histidine 48 and arginine 68. Topologically, residues 68–82 are cytoplasmic; the sequence is RIPLTWGHNKLPWKL. Positions 77 and 81 each coordinate L-ascorbate. The helical transmembrane segment at 83–103 threads the bilayer; it reads LHAGLLLLSFIFSVIGLCAVF. Residues histidine 84, 113–116, and histidine 118 each bind heme b; that span reads NLYS. Over 104 to 120 the chain is Lumenal; the sequence is NFHNVHHTANLYSLHSW. Residues 121-141 form a helical membrane-spanning segment; that stretch reads VGICTAALFTAQWVMGFTSFL. The Cytoplasmic portion of the chain corresponds to 142-155; that stretch reads LPCTPMAVRAFVKP. L-ascorbate is bound at residue arginine 150. A helical membrane pass occupies residues 156-176; that stretch reads THVWMGAMILVLSIVSCISGI. Histidine 157 and glutamate 178 together coordinate heme b. Residues 177-201 are Lumenal-facing; that stretch reads NEKLFFVLKETTNGTKPYSALPPEA. N-linked (GlcNAc...) asparagine glycosylation occurs at asparagine 189. Residues 202–222 form a helical membrane-spanning segment; the sequence is VAANSLGVIIVAFGLVVLKIL. The Cytoplasmic portion of the chain corresponds to 223 to 247; it reads SNQMWQRPEPGDDEGVYRPLAYDGS. Glutamine 228 is a heme b binding site.

In terms of assembly, homodimer. The cofactor is heme b.

It localises to the late endosome membrane. The protein localises to the lysosome membrane. It catalyses the reaction Fe(3+)(out) + L-ascorbate(in) = monodehydro-L-ascorbate radical(in) + Fe(2+)(out) + H(+). Its function is as follows. Transmembrane reductase that uses ascorbate as an electron donor in the cytoplasm and transfers electrons across membranes to reduce iron cations Fe(3+) into Fe(2+) in the lumen of the late endosome and lysosome. Reduced iron can then be extruded from the late endosome and lysosome to the cytoplasm by divalent metal-specific transporters. It is therefore most probably involved in endosomal and lysosomal cellular iron homeostasis. The protein is Lysosomal membrane ascorbate-dependent ferrireductase CYB561A3 (cyb561a3a) of Danio rerio (Zebrafish).